The primary structure comprises 325 residues: Odorant receptor 131-2 (325 aa).

The Extracellular portion of the chain corresponds to Met-1–Ser-22. Residues Asn-2 and Asn-6 are each glycosylated (N-linked (GlcNAc...) asparagine). The chain crosses the membrane as a helical span at residues Leu-23–Phe-43. Over Leu-44–Tyr-54 the chain is Cytoplasmic. The helical transmembrane segment at Ile-55 to Leu-75 threads the bilayer. Residues Val-76–Ile-91 lie on the Extracellular side of the membrane. A disulfide bridge connects residues Cys-89 and Cys-170. A helical membrane pass occupies residues Phe-92–Leu-112. The Cytoplasmic segment spans residues Glu-113–Asn-135. A helical membrane pass occupies residues Gly-136 to Phe-156. At Thr-157–Gln-190 the chain is on the extracellular side. The chain crosses the membrane as a helical span at residues Leu-191–Ala-211. Residues Lys-212–Arg-227 are Cytoplasmic-facing. Residues Thr-228–Ile-248 form a helical membrane-spanning segment. Residues Asp-249–Asn-267 lie on the Extracellular side of the membrane. A helical membrane pass occupies residues Phe-268–Leu-285. Residues Arg-286 to Tyr-325 lie on the Cytoplasmic side of the membrane.

The protein belongs to the G-protein coupled receptor 1 family. Homodimer. Monomer.

It localises to the cell membrane. The protein resides in the cytoplasm. Functionally, probable olfactory receptor. The protein is Odorant receptor 131-2 of Danio rerio (Zebrafish).